A 304-amino-acid polypeptide reads, in one-letter code: Aspartate carbamoyltransferase catalytic subunit (304 aa).

Positions 54 and 55 each coordinate carbamoyl phosphate. Lys-83 contributes to the L-aspartate binding site. 3 residues coordinate carbamoyl phosphate: Arg-104, His-132, and Gln-135. 2 residues coordinate L-aspartate: Arg-165 and Arg-226. Positions 265 and 266 each coordinate carbamoyl phosphate.

This sequence belongs to the aspartate/ornithine carbamoyltransferase superfamily. ATCase family. Heterooligomer of catalytic and regulatory chains.

The catalysed reaction is carbamoyl phosphate + L-aspartate = N-carbamoyl-L-aspartate + phosphate + H(+). Its pathway is pyrimidine metabolism; UMP biosynthesis via de novo pathway; (S)-dihydroorotate from bicarbonate: step 2/3. Functionally, catalyzes the condensation of carbamoyl phosphate and aspartate to form carbamoyl aspartate and inorganic phosphate, the committed step in the de novo pyrimidine nucleotide biosynthesis pathway. The protein is Aspartate carbamoyltransferase catalytic subunit of Pyrobaculum neutrophilum (strain DSM 2338 / JCM 9278 / NBRC 100436 / V24Sta) (Thermoproteus neutrophilus).